Reading from the N-terminus, the 292-residue chain is Beta-lactamase-like protein 2 homolog (292 aa).

Zn(2+) contacts are provided by histidine 76, histidine 78, aspartate 80, histidine 81, histidine 145, aspartate 163, and histidine 198.

This sequence belongs to the metallo-beta-lactamase superfamily. Glyoxalase II family.

This chain is Beta-lactamase-like protein 2 homolog, found in Drosophila melanogaster (Fruit fly).